We begin with the raw amino-acid sequence, 168 residues long: Desumoylating isopeptidase 1 (168 aa).

One can recognise a PPPDE domain in the interval 7–149 (YPVKLYVYDL…FGQALRPFLD (143 aa)). The active site involves His38. The Nuclear export signal 1 motif lies at 83–91 (IFLEYLSSL). Cys108 is an active-site residue. The Nuclear export signal 2 signature appears at 139–153 (PFGQALRPFLDSIQI).

Belongs to the DeSI family. In terms of assembly, homodimer. Interacts with UBQLN4; leading to the export of UBQLN4 from the nucleus.

The protein localises to the cytoplasm. It localises to the nucleus. The catalysed reaction is S-hexadecanoyl-L-cysteinyl-[protein] + H2O = L-cysteinyl-[protein] + hexadecanoate + H(+). Functionally, protease which deconjugates SUMO1, SUMO2 and SUMO3 from some substrate proteins. Has isopeptidase but not SUMO-processing activity. Desumoylates ZBTB46. Collaborates with UBQLN4 in the export of ubiquitinated proteins from the nucleus to the cytoplasm. Exhibits palmitoyl protein thioesterase (S-depalmitoylation) activity towards synthetic substrates 4-methylumbelliferyl-6-S-palmitoyl-beta-D-glucopyranoside and S-depalmitoylation probe 5 (DPP-5). This Rattus norvegicus (Rat) protein is Desumoylating isopeptidase 1 (Desi1).